A 318-amino-acid chain; its full sequence is MSFITEIKTFAALGSGVIGSGWVSRALAHGLDVVAWDPAPGAEAALRNRVAKCWGALEQQGLVPGASQNRLRFVATVEECVRDADFIQESAPERLELKLDLHSRISAAARSNVLIGSSTSGLLPSDVYESSAHPERCVVGHPFNPVYLLPLVEVVGGKNTAPAAIQAAIKVYESLGMRPLHVRKEVPGFIADRLLEALWREALHLVNDGVATTGEIDDAIRFGAGLRWSFMGTFLTYTLAGGEAGMRHFMTQFGPALQLPWTYLPAPELTDKLIDDVVDGTTDQLGKHSISGLERYRDDCLLAVLEAVKTTKARHGMA.

Residue 14 to 19 (GSGVIG) participates in NAD(+) binding.

Belongs to the 3-hydroxyacyl-CoA dehydrogenase family. L-carnitine dehydrogenase subfamily. In terms of assembly, homodimer.

It localises to the cytoplasm. The catalysed reaction is carnitine + NAD(+) = 3-dehydrocarnitine + NADH + H(+). It participates in amine and polyamine metabolism; carnitine metabolism. Functionally, catalyzes the NAD(+)-dependent oxidation of L-carnitine to 3-dehydrocarnitine. The polypeptide is L-carnitine dehydrogenase (Pseudomonas syringae pv. syringae (strain B728a)).